The sequence spans 253 residues: Ubiquinone/menaquinone biosynthesis C-methyltransferase UbiE (253 aa).

S-adenosyl-L-methionine is bound by residues Thr-76, Asp-97, and 125 to 126 (NA).

The protein belongs to the class I-like SAM-binding methyltransferase superfamily. MenG/UbiE family.

It carries out the reaction a 2-demethylmenaquinol + S-adenosyl-L-methionine = a menaquinol + S-adenosyl-L-homocysteine + H(+). The catalysed reaction is a 2-methoxy-6-(all-trans-polyprenyl)benzene-1,4-diol + S-adenosyl-L-methionine = a 5-methoxy-2-methyl-3-(all-trans-polyprenyl)benzene-1,4-diol + S-adenosyl-L-homocysteine + H(+). The protein operates within quinol/quinone metabolism; menaquinone biosynthesis; menaquinol from 1,4-dihydroxy-2-naphthoate: step 2/2. Its pathway is cofactor biosynthesis; ubiquinone biosynthesis. Its function is as follows. Methyltransferase required for the conversion of demethylmenaquinol (DMKH2) to menaquinol (MKH2) and the conversion of 2-polyprenyl-6-methoxy-1,4-benzoquinol (DDMQH2) to 2-polyprenyl-3-methyl-6-methoxy-1,4-benzoquinol (DMQH2). This Nitrobacter hamburgensis (strain DSM 10229 / NCIMB 13809 / X14) protein is Ubiquinone/menaquinone biosynthesis C-methyltransferase UbiE.